Reading from the N-terminus, the 412-residue chain is MGFITKAIPIVLAALSTVNGARILEAGPHAETIPNKYIVVMKKDVSEESFSAHTTWLSQTLNSRLMRRAGSSKPMAGMQNKYSLGGIFRAYSGEFDDAMIKDISSHDDVDFIEPDFVVRATTNGTNLTHQDNVPSWGLARVSTRKPGGTTYYYDPSAGKGVTAYVIDTGIDTKHEDFGGRAKWGKNLVDQMDEDCNGHGTHVAGTVGGTKYGLAKGVSLVAVKVLDCEGSGSNSGVIKGMEWAMMDASGGGNGTAKAAGKAVMNMSLGGPRSEATNQAAKAISDAGIFLAVAAGNENMDAQHSSPASEPSVCTVAASTKDDGKANFSNFGSVVDVYAPGKDIVSLKPGGGTDTLSGTSMASPHVCGLGAYLIGLGKQGGPGLCDTIKQMATDAIQSPGEDTTSKLIYNGSGK.

The N-terminal stretch at Met-1–Gly-20 is a signal peptide. Residues Ala-21–Leu-127 constitute a propeptide that is removed on maturation. Residues Lys-36 to Ala-120 enclose the Inhibitor I9 domain. The Peptidase S8 domain occupies Ser-135–Lys-412. Residues Asp-167 and His-198 each act as charge relay system in the active site. Asn-252, Asn-264, and Asn-325 each carry an N-linked (GlcNAc...) asparagine glycan. Ser-358 functions as the Charge relay system in the catalytic mechanism. Residue Asn-408 is glycosylated (N-linked (GlcNAc...) asparagine).

It belongs to the peptidase S8 family.

It is found in the secreted. Its function is as follows. Secreted subtilisin-like serine protease with keratinolytic activity that contributes to pathogenicity. The protein is Subtilisin-like protease 6 (SUB6) of Trichophyton verrucosum (strain HKI 0517).